The following is a 362-amino-acid chain: Phospho-N-acetylmuramoyl-pentapeptide-transferase (362 aa).

10 consecutive transmembrane segments (helical) span residues 28–48 (IISF…VITW), 72–92 (TPTM…MVCA), 94–114 (LSNI…ILGL), 131–151 (VLHK…IIFM), 169–189 (FMPQ…VGTS), 200–220 (GLAI…AWIS), 236–256 (FSGE…GFLW), 264–284 (IFMG…IAVL), 290–310 (LLLI…LQVI), and 339–359 (IIVR…ITLK).

Belongs to the glycosyltransferase 4 family. MraY subfamily. It depends on Mg(2+) as a cofactor.

It is found in the cell inner membrane. It catalyses the reaction UDP-N-acetyl-alpha-D-muramoyl-L-alanyl-gamma-D-glutamyl-meso-2,6-diaminopimeloyl-D-alanyl-D-alanine + di-trans,octa-cis-undecaprenyl phosphate = di-trans,octa-cis-undecaprenyl diphospho-N-acetyl-alpha-D-muramoyl-L-alanyl-D-glutamyl-meso-2,6-diaminopimeloyl-D-alanyl-D-alanine + UMP. It participates in cell wall biogenesis; peptidoglycan biosynthesis. Its function is as follows. Catalyzes the initial step of the lipid cycle reactions in the biosynthesis of the cell wall peptidoglycan: transfers peptidoglycan precursor phospho-MurNAc-pentapeptide from UDP-MurNAc-pentapeptide onto the lipid carrier undecaprenyl phosphate, yielding undecaprenyl-pyrophosphoryl-MurNAc-pentapeptide, known as lipid I. In Blochmanniella pennsylvanica (strain BPEN), this protein is Phospho-N-acetylmuramoyl-pentapeptide-transferase.